A 457-amino-acid chain; its full sequence is Flavin-containing monooxygenase FMO GS-OX2 (457 aa).

Residue 17 to 22 (GAGAAG) coordinates FAD. Position 211-216 (211-216 (GNFASG)) interacts with NADP(+).

Belongs to the FMO family.

It catalyses the reaction a (Z)-omega-(methylsulfanyl)-N-sulfo-alkylhydroximate S-glucoside + NADPH + O2 + H(+) = a (Z)-omega-(methylsulfinyl)-alkyl-glucosinolate + NADP(+) + H2O. Catalyzes the conversion of methylthioalkyl glucosinolates of any chain length into methylsulfinylalkyl glucosinolates. This is Flavin-containing monooxygenase FMO GS-OX2 (FMOGS-OX2) from Arabidopsis thaliana (Mouse-ear cress).